The sequence spans 180 residues: uncharacterized protein (180 aa).

Belongs to the isochorismatase family.

This is an uncharacterized protein from Bacillus subtilis (strain 168).